Consider the following 477-residue polypeptide: MQVLHVCSELFPLLKTGGLADVLGALPAAQIAEGVDTRVLLPGFPDLRRGVADAKVITRRDTFAGRISLLYGHFNGVGIYLIDAPHLYDRPGSPYHDTNLYAYADNVIRFALLGWVGSEMAAGLDPFWRPDIVHAHDWHAGLTPAYLAARGRPAKSVFTVHNLAYKGMFYAHHMDEIGLPWSMFNMNGLEFNGEISFLKAGLYYADHITAVSPTYAREITEPQFAYGLEGLLKQRHSEGRLSGILNGVDENIWNPAHDLLLASRYTRDTLEEKAENKRQLQIAMGLKVNDKVPLFAVVSRLTSQKGLDLVLEALPGLLEQGGQLALLGAGDPVLQEGFLAAAAEHPGQVGVQIGYHEAFSHRIMGGADVILVPSRFEPCGLTQLYGLKYGTLPLVRRTGGLADTVSDSSLENLADGIASGFVFEDSNAWSLLRAIRRAFVLWSRPSLWRFVQRQAMGMDFSWQVAAKSYRELYQRLL.

Residue K15 participates in ADP-alpha-D-glucose binding.

This sequence belongs to the glycosyltransferase 1 family. Bacterial/plant glycogen synthase subfamily.

The catalysed reaction is [(1-&gt;4)-alpha-D-glucosyl](n) + ADP-alpha-D-glucose = [(1-&gt;4)-alpha-D-glucosyl](n+1) + ADP + H(+). It functions in the pathway glycan biosynthesis; glycogen biosynthesis. In terms of biological role, synthesizes alpha-1,4-glucan chains using ADP-glucose. This is Glycogen synthase from Cronobacter sakazakii (strain ATCC BAA-894) (Enterobacter sakazakii).